Here is a 354-residue protein sequence, read N- to C-terminus: Holliday junction branch migration complex subunit RuvB (354 aa).

The span at 1–10 (MAIKRNQGSN) shows a compositional bias: polar residues. A disordered region spans residues 1 to 36 (MAIKRNQGSNPKPEKKERLTKAETHQEQDNLEESIR). Positions 12-36 (KPEKKERLTKAETHQEQDNLEESIR) are enriched in basic and acidic residues. The large ATPase domain (RuvB-L) stretch occupies residues 13–196 (PEKKERLTKA…FGLIQRLKFY (184 aa)). Residues Ile-35, Arg-36, Gly-77, Lys-80, Thr-81, Thr-82, 143-145 (EDY), Arg-186, Tyr-196, and Arg-233 each bind ATP. Thr-81 lines the Mg(2+) pocket. A small ATPAse domain (RuvB-S) region spans residues 197-267 (EPEELALIIK…LAAEALDIYQ (71 aa)). The interval 270-354 (PQGLDWTDRL…EEQLSIFSEQ (85 aa)) is head domain (RuvB-H). Arg-325 and Arg-330 together coordinate DNA.

This sequence belongs to the RuvB family. In terms of assembly, homohexamer. Forms an RuvA(8)-RuvB(12)-Holliday junction (HJ) complex. HJ DNA is sandwiched between 2 RuvA tetramers; dsDNA enters through RuvA and exits via RuvB. An RuvB hexamer assembles on each DNA strand where it exits the tetramer. Each RuvB hexamer is contacted by two RuvA subunits (via domain III) on 2 adjacent RuvB subunits; this complex drives branch migration. In the full resolvosome a probable DNA-RuvA(4)-RuvB(12)-RuvC(2) complex forms which resolves the HJ.

It localises to the cytoplasm. It catalyses the reaction ATP + H2O = ADP + phosphate + H(+). Functionally, the RuvA-RuvB-RuvC complex processes Holliday junction (HJ) DNA during genetic recombination and DNA repair, while the RuvA-RuvB complex plays an important role in the rescue of blocked DNA replication forks via replication fork reversal (RFR). RuvA specifically binds to HJ cruciform DNA, conferring on it an open structure. The RuvB hexamer acts as an ATP-dependent pump, pulling dsDNA into and through the RuvAB complex. RuvB forms 2 homohexamers on either side of HJ DNA bound by 1 or 2 RuvA tetramers; 4 subunits per hexamer contact DNA at a time. Coordinated motions by a converter formed by DNA-disengaged RuvB subunits stimulates ATP hydrolysis and nucleotide exchange. Immobilization of the converter enables RuvB to convert the ATP-contained energy into a lever motion, pulling 2 nucleotides of DNA out of the RuvA tetramer per ATP hydrolyzed, thus driving DNA branch migration. The RuvB motors rotate together with the DNA substrate, which together with the progressing nucleotide cycle form the mechanistic basis for DNA recombination by continuous HJ branch migration. Branch migration allows RuvC to scan DNA until it finds its consensus sequence, where it cleaves and resolves cruciform DNA. The protein is Holliday junction branch migration complex subunit RuvB of Crocosphaera subtropica (strain ATCC 51142 / BH68) (Cyanothece sp. (strain ATCC 51142)).